The sequence spans 161 residues: MLSPSEFTIGTLGSAAPLSLILPRTKYEATMLVGHVDKAPAAVFLSGEFAFHYFPSTDNDSWRGLIVPGVRVEVDETSVFDQGQTMAPLGAAIRIDTRLAIRAKSEHSLSGSSALTIHDKLVSAGDLRAGFTRWQIVIGEGQTKRVLWQRSDEDEAAKSSA.

This is an uncharacterized protein from Sinorhizobium fredii (strain NBRC 101917 / NGR234).